The following is a 257-amino-acid chain: Hydroxypyruvate/pyruvate aldolase (257 aa).

Catalysis depends on H48, which acts as the Proton acceptor. Residues E152 and D178 each coordinate a divalent metal cation.

It belongs to the HpcH/HpaI aldolase family. The cofactor is a divalent metal cation.

It catalyses the reaction D-glyceraldehyde + 3-hydroxypyruvate = 2-dehydro-D-gluconate. The catalysed reaction is D-glyceraldehyde + pyruvate = 2-dehydro-3-deoxy-L-galactonate. The enzyme catalyses 2-dehydro-3-deoxy-D-gluconate = D-glyceraldehyde + pyruvate. Functionally, aldolase which can catalyze in vitro the aldolisation reaction between hydroxypyruvate (HPA) or pyruvate (PA) and D-glyceraldehyde (D-GA). The condensation of hydroxypyruvate and D-glyceraldehyde produces 2-dehydro-D-gluconate as the major product. The condensation of pyruvate and D-glyceraldehyde produces 2-dehydro-3-deoxy-L-galactonate as the major product and 2-dehydro-3-deoxy-D-gluconate. The sequence is that of Hydroxypyruvate/pyruvate aldolase from Roseovarius nubinhibens (strain ATCC BAA-591 / DSM 15170 / ISM).